We begin with the raw amino-acid sequence, 240 residues long: Splicing factor rtf2 (240 aa).

Disordered regions lie at residues 1 to 22 (MGNDGGSLPTRNELVKEPGKVP) and 181 to 240 (SLNK…RVKI). The segment covering 185-210 (ASKKSNKNGDKKRKHVSKSNSKHAKH) has biased composition (basic residues). Basic and acidic residues-rich tracts occupy residues 211-224 (ELRTNRMLDGENVK) and 231-240 (DMERVKRVKI).

This sequence belongs to the rtf2 family. As to quaternary structure, interacts with pcn1.

Its subcellular location is the nucleus. Putative splicing factor that is required for the correct splicing of a subset of pre-mRNAs. Required for the correct splicing of rtf1, a replication termination factor that mediates site-specific replication termination at replication barrier RTS1. The protein is Splicing factor rtf2 of Schizosaccharomyces pombe (strain 972 / ATCC 24843) (Fission yeast).